The chain runs to 43 residues: MEPTFSLIVAIAAVTICITAFAIYTAFGPPSKDLQDPYEMHED.

Residues 7 to 27 traverse the membrane as a helical segment; sequence LIVAIAAVTICITAFAIYTAF.

It belongs to the PsbN family.

It is found in the cellular thylakoid membrane. Functionally, may play a role in photosystem I and II biogenesis. In Synechococcus sp. (strain JA-2-3B'a(2-13)) (Cyanobacteria bacterium Yellowstone B-Prime), this protein is Protein PsbN.